A 140-amino-acid chain; its full sequence is Ubiquitin-like protein ATG12 (140 aa).

The tract at residues 1–52 (MAEEPQTVLQLPPSSAAGGEGLTDVSPETTTPEPPSSAAVSPGTEEPAGDTK) is disordered. Positions 25–42 (VSPETTTPEPPSSAAVSP) are enriched in low complexity. A Glycyl lysine isopeptide (Gly-Lys) (interchain with K-? in acceptor protein) cross-link involves residue glycine 140.

The protein belongs to the ATG12 family. As to quaternary structure, forms a conjugate with ATG5. Part of the minor complex composed of 4 sets of ATG12-ATG5 and ATG16L1 (400 kDa); this complex interacts with ATG3 leading to disruption of ATG7 interaction and promotion of ATG8-like proteins lipidation. Forms an 800-kDa complex composed of ATG12-ATG5 and ATG16L2. Interacts with DHX58/RIG-1, IFIH1/MDA5 and MAVS/IPS-1 in monomeric form as well as in ATG12-ATG5 conjugate. The interaction with MAVS is further enhanced upon vesicular stomatitis virus (VSV) infection. Interacts with ATG3; this interaction is essential for phosphatidylethanolamine (PE)-conjugated ATG8-like proteins formation. Interacts with ATG7. Interacts with ATG10. Interacts with TECPR1. Interacts with SH3BGRL. The ATG12-ATG5 conjugate interacts with PDCD6IP (via the BRO1 domain); this interaction is bridged by ATG12 and promotes multiple PDCD6IP-mediated functions such as endolysosomal trafficking, macroautophagy and exosome biogenesis. In terms of processing, acetylated by EP300.

The protein localises to the cytoplasm. The protein resides in the preautophagosomal structure membrane. Functionally, ubiquitin-like protein involved in autophagy vesicles formation. Conjugation with ATG5 through a ubiquitin-like conjugating system involving also ATG7 as an E1-like activating enzyme and ATG10 as an E2-like conjugating enzyme, is essential for its function. The ATG12-ATG5 conjugate acts as an E3-like enzyme which is required for lipidation of ATG8 family proteins and their association to the vesicle membranes. The ATG12-ATG5 conjugate also negatively regulates the innate antiviral immune response by blocking the type I IFN production pathway through direct association with RARRES3 and MAVS. Also plays a role in translation or delivery of incoming viral RNA to the translation apparatus. As part of the ATG8 conjugation system with ATG5 and ATG16L1, required for recruitment of LRRK2 to stressed lysosomes and induction of LRRK2 kinase activity in response to lysosomal stress. The protein is Ubiquitin-like protein ATG12 of Pongo abelii (Sumatran orangutan).